The following is a 372-amino-acid chain: Cytochrome b (372 aa).

The next 4 helical transmembrane spans lie at 32-52, 77-99, 114-134, and 180-200; these read LGFNLGVMIALQILVGICLSW, FIIRSLHIIFTSLLYFLLYIHII, VWFFGFLIFIFILIIAFIGYT, and LHSIHIFLPFVLLFLIGAHFF. Positions 83 and 97 each coordinate heme b. Heme b contacts are provided by His-184 and His-198. Residue His-203 coordinates a ubiquinone. The next 4 helical transmembrane spans lie at 228–248, 297–317, 330–350, and 351–371; these read YYLRDLFLIINILCFLIYYIC, LLFVLCFALFLFILNCILIFI, LVLFYYLCVGGFLSLYVVLCF, and PLWMEIQFWVLLLFCFIVCRL.

The protein belongs to the cytochrome b family. The main subunits of complex b-c1 are: cytochrome b, cytochrome c1 and the Rieske protein. Heme b is required as a cofactor.

Its subcellular location is the mitochondrion inner membrane. Component of the ubiquinol-cytochrome c reductase complex (complex III or cytochrome b-c1 complex) that is part of the mitochondrial respiratory chain. The b-c1 complex mediates electron transfer from ubiquinol to cytochrome c. Contributes to the generation of a proton gradient across the mitochondrial membrane that is then used for ATP synthesis. In Trypanoplasma borreli, this protein is Cytochrome b (MT-CYB).